A 913-amino-acid polypeptide reads, in one-letter code: Eukaryotic translation initiation factor 3 subunit C (913 aa).

The tract at residues 1–31 (MSRFFANGSDSESESSEEEVQASNFNKANNF) is disordered. A compositionally biased stretch (acidic residues) spans 11-20 (SESESSEEEV). Over residues 21–31 (QASNFNKANNF) the composition is skewed to polar residues. Phosphoserine is present on residues Ser-34, Ser-165, Ser-177, and Ser-186. Disordered stretches follow at residues 157-195 (FREAPDQESDVDEGEGEAHDSDAERAGADSDGGIGAGTG) and 208-285 (PTKV…EDGE). Residues 162 to 171 (DQESDVDEGE) show a composition bias toward acidic residues. Residues 172–184 (GEAHDSDAERAGA) are compositionally biased toward basic and acidic residues. Residues 214-239 (DEDDSDDSIDWDSDTESETESSEDEN) are compositionally biased toward acidic residues. Over residues 244–263 (MRERFLKRTTEKEDKDDDKR) the composition is skewed to basic and acidic residues. The segment covering 264–276 (KDKRKEQKHKVRK) has biased composition (basic residues). Residues 645 to 821 (FHMHINLELL…ETVVMHRSEP (177 aa)) form the PCI domain. Residues 856–913 (RGNMGNRDRGYNRNQNNQGGNWGGQRRDNRNQRNRNQRGHHKQQQQQQQQQVQTIEEE) form a disordered region. A compositionally biased stretch (basic residues) spans 887–898 (QRNRNQRGHHKQ).

This sequence belongs to the eIF-3 subunit C family. In terms of assembly, component of the eukaryotic translation initiation factor 3 (eIF-3) complex. The eIF-3 complex interacts with pix.

Its subcellular location is the cytoplasm. Its function is as follows. Component of the eukaryotic translation initiation factor 3 (eIF-3) complex, which is involved in protein synthesis of a specialized repertoire of mRNAs and, together with other initiation factors, stimulates binding of mRNA and methionyl-tRNAi to the 40S ribosome. The eIF-3 complex specifically targets and initiates translation of a subset of mRNAs involved in cell proliferation. In Drosophila virilis (Fruit fly), this protein is Eukaryotic translation initiation factor 3 subunit C.